The following is a 228-amino-acid chain: ATP synthase F(0) complex subunit a (228 aa).

The next 5 membrane-spanning stretches (helical) occupy residues 13–33 (NILAIPLMTISLLMLTIIFPM), 69–89 (WALILTSLMTLLLTSNLLGLL), 98–118 (QLSMNLGFALPMWLATLLIGL), 139–159 (IPTLILIESISLMIRPLALGV), and 194–214 (ILLFLLTILEMAVAMIQALVF).

It belongs to the ATPase A chain family. As to quaternary structure, component of the ATP synthase complex composed at least of ATP5F1A/subunit alpha, ATP5F1B/subunit beta, ATP5MC1/subunit c (homooctomer), MT-ATP6/subunit a, MT-ATP8/subunit 8, ATP5ME/subunit e, ATP5MF/subunit f, ATP5MG/subunit g, ATP5MK/subunit k, ATP5MJ/subunit j, ATP5F1C/subunit gamma, ATP5F1D/subunit delta, ATP5F1E/subunit epsilon, ATP5PF/subunit F6, ATP5PB/subunit b, ATP5PD/subunit d, ATP5PO/subunit OSCP. ATP synthase complex consists of a soluble F(1) head domain (subunits alpha(3) and beta(3)) - the catalytic core - and a membrane F(0) domain - the membrane proton channel (subunits c, a, 8, e, f, g, k and j). These two domains are linked by a central stalk (subunits gamma, delta, and epsilon) rotating inside the F1 region and a stationary peripheral stalk (subunits F6, b, d, and OSCP). Interacts with DNAJC30; interaction is direct.

The protein localises to the mitochondrion inner membrane. It catalyses the reaction H(+)(in) = H(+)(out). In terms of biological role, subunit a, of the mitochondrial membrane ATP synthase complex (F(1)F(0) ATP synthase or Complex V) that produces ATP from ADP in the presence of a proton gradient across the membrane which is generated by electron transport complexes of the respiratory chain. ATP synthase complex consist of a soluble F(1) head domain - the catalytic core - and a membrane F(1) domain - the membrane proton channel. These two domains are linked by a central stalk rotating inside the F(1) region and a stationary peripheral stalk. During catalysis, ATP synthesis in the catalytic domain of F(1) is coupled via a rotary mechanism of the central stalk subunits to proton translocation. With the subunit c (ATP5MC1), forms the proton-conducting channel in the F(0) domain, that contains two crucial half-channels (inlet and outlet) that facilitate proton movement from the mitochondrial intermembrane space (IMS) into the matrix. Protons are taken up via the inlet half-channel and released through the outlet half-channel, following a Grotthuss mechanism. The sequence is that of ATP synthase F(0) complex subunit a from Pelomedusa subrufa (African side-necked turtle).